The primary structure comprises 256 residues: uncharacterized protein (256 aa).

The first 22 residues, 1–22 (MGYLKRFALYISVMILIFAIAG), serve as a signal peptide directing secretion. Cysteine 23 carries N-palmitoyl cysteine lipidation. Residue cysteine 23 is the site of S-diacylglycerol cysteine attachment.

Belongs to the staphylococcal tandem lipoprotein family.

It is found in the cell membrane. This is an uncharacterized protein from Staphylococcus aureus (strain COL).